The primary structure comprises 221 residues: Protein GrpE 1 (221 aa).

Disordered regions lie at residues 1–44 and 192–221; these read MTEE…AAAQ and VAEP…PEEG. Residues 26-44 show a composition bias toward low complexity; sequence KAAPSEGAAPAGDAAAAAQ. Residues 203–221 are compositionally biased toward basic and acidic residues; that stretch reads KADEAEAADDKESGGPEEG.

This sequence belongs to the GrpE family. Homodimer.

Its subcellular location is the cytoplasm. Functionally, participates actively in the response to hyperosmotic and heat shock by preventing the aggregation of stress-denatured proteins, in association with DnaK and GrpE. It is the nucleotide exchange factor for DnaK and may function as a thermosensor. Unfolded proteins bind initially to DnaJ; upon interaction with the DnaJ-bound protein, DnaK hydrolyzes its bound ATP, resulting in the formation of a stable complex. GrpE releases ADP from DnaK; ATP binding to DnaK triggers the release of the substrate protein, thus completing the reaction cycle. Several rounds of ATP-dependent interactions between DnaJ, DnaK and GrpE are required for fully efficient folding. The protein is Protein GrpE 1 of Streptomyces avermitilis (strain ATCC 31267 / DSM 46492 / JCM 5070 / NBRC 14893 / NCIMB 12804 / NRRL 8165 / MA-4680).